The following is a 158-amino-acid chain: SsrA-binding protein (158 aa).

Belongs to the SmpB family.

It localises to the cytoplasm. Its function is as follows. Required for rescue of stalled ribosomes mediated by trans-translation. Binds to transfer-messenger RNA (tmRNA), required for stable association of tmRNA with ribosomes. tmRNA and SmpB together mimic tRNA shape, replacing the anticodon stem-loop with SmpB. tmRNA is encoded by the ssrA gene; the 2 termini fold to resemble tRNA(Ala) and it encodes a 'tag peptide', a short internal open reading frame. During trans-translation Ala-aminoacylated tmRNA acts like a tRNA, entering the A-site of stalled ribosomes, displacing the stalled mRNA. The ribosome then switches to translate the ORF on the tmRNA; the nascent peptide is terminated with the 'tag peptide' encoded by the tmRNA and targeted for degradation. The ribosome is freed to recommence translation, which seems to be the essential function of trans-translation. The chain is SsrA-binding protein from Roseiflexus castenholzii (strain DSM 13941 / HLO8).